Here is a 504-residue protein sequence, read N- to C-terminus: Maturase K (504 aa).

It belongs to the intron maturase 2 family. MatK subfamily.

The protein localises to the plastid. It is found in the chloroplast. Functionally, usually encoded in the trnK tRNA gene intron. Probably assists in splicing its own and other chloroplast group II introns. In Nepenthes distillatoria (Pitcher plant), this protein is Maturase K.